The sequence spans 290 residues: Probable endonuclease 4 (290 aa).

9 residues coordinate Zn(2+): H69, H109, E145, D179, H182, H216, D229, H231, and E261.

Belongs to the AP endonuclease 2 family. Zn(2+) is required as a cofactor.

It catalyses the reaction Endonucleolytic cleavage to 5'-phosphooligonucleotide end-products.. Endonuclease IV plays a role in DNA repair. It cleaves phosphodiester bonds at apurinic or apyrimidinic (AP) sites, generating a 3'-hydroxyl group and a 5'-terminal sugar phosphate. The sequence is that of Probable endonuclease 4 from Chlorobium limicola (strain DSM 245 / NBRC 103803 / 6330).